The following is an 81-amino-acid chain: Photosystem I iron-sulfur center (81 aa).

2 consecutive 4Fe-4S ferredoxin-type domains span residues 2-31 (SHTV…MVPW) and 39-68 (VASS…IRVY). 8 residues coordinate [4Fe-4S] cluster: Cys11, Cys14, Cys17, Cys21, Cys48, Cys51, Cys54, and Cys58.

As to quaternary structure, the cyanobacterial PSI reaction center is composed of one copy each of PsaA,B,C,D,E,F,I,J,K,L,M and X, and forms trimeric complexes. Requires [4Fe-4S] cluster as cofactor.

It is found in the cellular thylakoid membrane. It catalyses the reaction reduced [plastocyanin] + hnu + oxidized [2Fe-2S]-[ferredoxin] = oxidized [plastocyanin] + reduced [2Fe-2S]-[ferredoxin]. In terms of biological role, apoprotein for the two 4Fe-4S centers FA and FB of photosystem I (PSI); essential for photochemical activity. FB is the terminal electron acceptor of PSI, donating electrons to ferredoxin. The C-terminus interacts with PsaA/B/D and helps assemble the protein into the PSI complex. Required for binding of PsaD and PsaE to PSI. PSI is a plastocyanin/cytochrome c6-ferredoxin oxidoreductase, converting photonic excitation into a charge separation, which transfers an electron from the donor P700 chlorophyll pair to the spectroscopically characterized acceptors A0, A1, FX, FA and FB in turn. The chain is Photosystem I iron-sulfur center from Trichormus variabilis (strain ATCC 29413 / PCC 7937) (Anabaena variabilis).